A 481-amino-acid chain; its full sequence is Glutamate-1-semialdehyde 2,1-aminomutase, chloroplastic (481 aa).

A disordered region spans residues 18-40 (NQTPKWGFSPSHRRCNPSSSSSA). K321 is modified (N6-(pyridoxal phosphate)lysine).

This sequence belongs to the class-III pyridoxal-phosphate-dependent aminotransferase family. HemL subfamily. Homodimer. The cofactor is pyridoxal 5'-phosphate.

It localises to the plastid. The protein localises to the chloroplast. The enzyme catalyses (S)-4-amino-5-oxopentanoate = 5-aminolevulinate. It participates in porphyrin-containing compound metabolism; protoporphyrin-IX biosynthesis; 5-aminolevulinate from L-glutamyl-tRNA(Glu): step 2/2. It functions in the pathway porphyrin-containing compound metabolism; chlorophyll biosynthesis. This Solanum lycopersicum (Tomato) protein is Glutamate-1-semialdehyde 2,1-aminomutase, chloroplastic.